We begin with the raw amino-acid sequence, 327 residues long: Phenylalanine--tRNA ligase alpha subunit (327 aa).

Position 252 (Glu252) interacts with Mg(2+).

It belongs to the class-II aminoacyl-tRNA synthetase family. Phe-tRNA synthetase alpha subunit type 1 subfamily. In terms of assembly, tetramer of two alpha and two beta subunits. It depends on Mg(2+) as a cofactor.

The protein localises to the cytoplasm. The catalysed reaction is tRNA(Phe) + L-phenylalanine + ATP = L-phenylalanyl-tRNA(Phe) + AMP + diphosphate + H(+). This chain is Phenylalanine--tRNA ligase alpha subunit, found in Shewanella baltica (strain OS223).